A 325-amino-acid polypeptide reads, in one-letter code: MSETTSWQPSASVANLLKRASIIAAIRRFFTDRGVLEVETPAMSQATVTDIFLYPFQTRFVGPGAADGMTMYLMTSPEYHMKRLLAAGSGPIFQLCRSFRNEESGRHHNPEFTMLEWYRPHYDMYRLMNEVDDLLQQVLDCESAEMLSYQQAFLRHLELDPLSVDKAQLREAAEKLGLGDIACREDDRDSLVQMLFTFGVEPHIGRDKPAFVYHFPATQASLAEISSEDHRVAERFEVYFKGIELANGFRELTDADEQRQRFEQDNRKRAARDLPQQPIDENLLAALKHGLPECAGVALGVDRLIMLALNAEKLSDVIAFSVERA.

Substrate is bound at residue 76–78 (SPE). ATP is bound by residues 100–102 (RNE) and asparagine 109. Substrate is bound at residue tyrosine 118. 244–245 (EL) provides a ligand contact to ATP. Residue glutamate 251 coordinates substrate. Glycine 300 is a binding site for ATP.

This sequence belongs to the class-II aminoacyl-tRNA synthetase family. EpmA subfamily. As to quaternary structure, homodimer.

The catalysed reaction is D-beta-lysine + L-lysyl-[protein] + ATP = N(6)-((3R)-3,6-diaminohexanoyl)-L-lysyl-[protein] + AMP + diphosphate + H(+). In terms of biological role, with EpmB is involved in the beta-lysylation step of the post-translational modification of translation elongation factor P (EF-P). Catalyzes the ATP-dependent activation of (R)-beta-lysine produced by EpmB, forming a lysyl-adenylate, from which the beta-lysyl moiety is then transferred to the epsilon-amino group of a conserved specific lysine residue in EF-P. This chain is Elongation factor P--(R)-beta-lysine ligase, found in Pectobacterium carotovorum subsp. carotovorum (strain PC1).